The sequence spans 749 residues: EF-hand domain-containing family member C2 (749 aa).

DM10 domains follow at residues aspartate 75–glycine 182, histidine 226–tyrosine 368, and lysine 431–threonine 538. In terms of domain architecture, EF-hand spans glycine 558 to glycine 593.

In terms of assembly, microtubule inner protein component of sperm flagellar doublet microtubules. Expressed in airway epithelial cells.

Its subcellular location is the cytoplasm. It localises to the cytoskeleton. The protein resides in the cilium axoneme. It is found in the flagellum axoneme. Its function is as follows. Microtubule inner protein (MIP) part of the dynein-decorated doublet microtubules (DMTs) in cilia axoneme, which is required for motile cilia beating. The sequence is that of EF-hand domain-containing family member C2 from Homo sapiens (Human).